The sequence spans 122 residues: Large ribosomal subunit protein bL12 (122 aa).

Belongs to the bacterial ribosomal protein bL12 family. Homodimer. Part of the ribosomal stalk of the 50S ribosomal subunit. Forms a multimeric L10(L12)X complex, where L10 forms an elongated spine to which 2 to 4 L12 dimers bind in a sequential fashion. Binds GTP-bound translation factors.

Forms part of the ribosomal stalk which helps the ribosome interact with GTP-bound translation factors. Is thus essential for accurate translation. The protein is Large ribosomal subunit protein bL12 of Glaesserella parasuis serovar 5 (strain SH0165) (Haemophilus parasuis).